Here is a 256-residue protein sequence, read N- to C-terminus: Thiazole synthase (256 aa).

Lys-95 (schiff-base intermediate with DXP) is an active-site residue. 1-deoxy-D-xylulose 5-phosphate-binding positions include Gly-156, 182-183 (AG), and 204-205 (NT).

Belongs to the ThiG family. In terms of assembly, homotetramer. Forms heterodimers with either ThiH or ThiS.

It is found in the cytoplasm. The enzyme catalyses [ThiS sulfur-carrier protein]-C-terminal-Gly-aminoethanethioate + 2-iminoacetate + 1-deoxy-D-xylulose 5-phosphate = [ThiS sulfur-carrier protein]-C-terminal Gly-Gly + 2-[(2R,5Z)-2-carboxy-4-methylthiazol-5(2H)-ylidene]ethyl phosphate + 2 H2O + H(+). Its pathway is cofactor biosynthesis; thiamine diphosphate biosynthesis. Functionally, catalyzes the rearrangement of 1-deoxy-D-xylulose 5-phosphate (DXP) to produce the thiazole phosphate moiety of thiamine. Sulfur is provided by the thiocarboxylate moiety of the carrier protein ThiS. In vitro, sulfur can be provided by H(2)S. This chain is Thiazole synthase, found in Escherichia coli O81 (strain ED1a).